Consider the following 380-residue polypeptide: Probable pectin lyase A (380 aa).

An N-terminal signal peptide occupies residues 1–20 (MRYTSLFTAVTAALASTAAA). 2 disulfides stabilise this stretch: Cys83–Cys102 and Cys92–Cys226. N-linked (GlcNAc...) asparagine glycosylation is present at Asn129. Arg256 is an active-site residue. A disulfide bridge links Cys323 with Cys331.

Belongs to the polysaccharide lyase 1 family.

The protein resides in the secreted. It carries out the reaction Eliminative cleavage of (1-&gt;4)-alpha-D-galacturonan methyl ester to give oligosaccharides with 4-deoxy-6-O-methyl-alpha-D-galact-4-enuronosyl groups at their non-reducing ends.. Functionally, pectinolytic enzymes consist of four classes of enzymes: pectin lyase, polygalacturonase, pectin methylesterase and rhamnogalacturonase. Among pectinolytic enzymes, pectin lyase is the most important in depolymerization of pectin, since it cleaves internal glycosidic bonds of highly methylated pectins. The chain is Probable pectin lyase A (pelA) from Aspergillus fumigatus (strain ATCC MYA-4609 / CBS 101355 / FGSC A1100 / Af293) (Neosartorya fumigata).